The chain runs to 504 residues: MVSIRPDEISSILKQQIANYDKSVSVSNVGTVLQIGDGIARIYGLEKVMAGELVEFEDGTEGIALNLEDDNVGAVLMGEALGVQEGSTVKSTGKIASVPVGQAMLGRVVNPLGQPVDGNGDIATSDSRLIESLAPGIIKRKSVHEPMQTGITSIDAMIPIGRGQRELIIGDRQTGKTAIAIDTIINQKGQDVVCVYVAVGQKSASVAQVVEVLREKGALEYTIVVNASASEAAALQYLAPYTGAAIAEHFMYQGKATLVIYDDLTKQAQAYRQMSLLLRRPPGREAYPGDVFYCHSRLLERAAKLSESMGSGSMTALPIIETQAGDVSAYIPTNVISITDGQIFLSADLFNSGLRPAINVGISVSRVGGAAQTKAIKKIAGTLKLELAQFDELAAFSQFASDLDEATQKQLGRGKRLRELLKQAQFAPLNLAEQVAVVYAGVKGLIDEVPVEQVTQFAGELREYLKTSKPDYIKQVLTEKKLNEEIESVLKESINEVKSSMLAA.

170-177 contacts ATP; that stretch reads GDRQTGKT.

The protein belongs to the ATPase alpha/beta chains family. In terms of assembly, F-type ATPases have 2 components, CF(1) - the catalytic core - and CF(0) - the membrane proton channel. CF(1) has five subunits: alpha(3), beta(3), gamma(1), delta(1), epsilon(1). CF(0) has four main subunits: a, b, b' and c.

The protein resides in the cellular thylakoid membrane. It catalyses the reaction ATP + H2O + 4 H(+)(in) = ADP + phosphate + 5 H(+)(out). Functionally, produces ATP from ADP in the presence of a proton gradient across the membrane. The alpha chain is a regulatory subunit. This Prochlorococcus marinus (strain MIT 9211) protein is ATP synthase subunit alpha.